A 486-amino-acid chain; its full sequence is uncharacterized protein (486 aa).

LRR repeat units follow at residues 18 to 39 (NLKK…KKLV), 43 to 59 (ELHI…NIPE), 60 to 81 (NIKS…TKLK), 82 to 103 (NITY…ILPH), 104 to 125 (SIEF…NNLV), 126 to 147 (NLKK…FPIS), 148 to 168 (IVEL…EKLI), 169 to 190 (NLKK…IKFP), and 198 to 219 (DYQS…IEYE).

This is an uncharacterized protein from Amsacta moorei entomopoxvirus (AmEPV).